Here is a 369-residue protein sequence, read N- to C-terminus: UDP-N-acetylglucosamine--N-acetylmuramyl-(pentapeptide) pyrophosphoryl-undecaprenol N-acetylglucosamine transferase (369 aa).

UDP-N-acetyl-alpha-D-glucosamine-binding positions include 16–18 (TGG), Asn-130, Arg-171, Ser-196, and Gln-297.

This sequence belongs to the glycosyltransferase 28 family. MurG subfamily.

The protein resides in the cell inner membrane. The catalysed reaction is di-trans,octa-cis-undecaprenyl diphospho-N-acetyl-alpha-D-muramoyl-L-alanyl-D-glutamyl-meso-2,6-diaminopimeloyl-D-alanyl-D-alanine + UDP-N-acetyl-alpha-D-glucosamine = di-trans,octa-cis-undecaprenyl diphospho-[N-acetyl-alpha-D-glucosaminyl-(1-&gt;4)]-N-acetyl-alpha-D-muramoyl-L-alanyl-D-glutamyl-meso-2,6-diaminopimeloyl-D-alanyl-D-alanine + UDP + H(+). It functions in the pathway cell wall biogenesis; peptidoglycan biosynthesis. Cell wall formation. Catalyzes the transfer of a GlcNAc subunit on undecaprenyl-pyrophosphoryl-MurNAc-pentapeptide (lipid intermediate I) to form undecaprenyl-pyrophosphoryl-MurNAc-(pentapeptide)GlcNAc (lipid intermediate II). This chain is UDP-N-acetylglucosamine--N-acetylmuramyl-(pentapeptide) pyrophosphoryl-undecaprenol N-acetylglucosamine transferase, found in Desulfotalea psychrophila (strain LSv54 / DSM 12343).